Consider the following 357-residue polypeptide: ATP-dependent 6-phosphofructokinase 2 (357 aa).

Residues G12, 80–81, and 107–110 each bind ATP; these read KG and GDGS. D108 is a Mg(2+) binding site. Substrate-binding positions include 131–133, R168, 175–177, E229, R272, and 278–281; these read TID, MGR, and HIQR. The active-site Proton acceptor is D133.

It belongs to the phosphofructokinase type A (PFKA) family. Mixed-substrate PFK group III subfamily. In terms of assembly, homodimer or homotetramer. Requires Mg(2+) as cofactor.

It is found in the cytoplasm. The enzyme catalyses beta-D-fructose 6-phosphate + ATP = beta-D-fructose 1,6-bisphosphate + ADP + H(+). Its pathway is carbohydrate degradation; glycolysis; D-glyceraldehyde 3-phosphate and glycerone phosphate from D-glucose: step 3/4. Subject to allosteric activation by ADP and other diphosphonucleosides, and inhibition by phosphoenolpyruvate. Functionally, catalyzes the phosphorylation of D-fructose 6-phosphate to fructose 1,6-bisphosphate by ATP, the first committing step of glycolysis. This Nostoc sp. (strain PCC 7120 / SAG 25.82 / UTEX 2576) protein is ATP-dependent 6-phosphofructokinase 2.